A 589-amino-acid chain; its full sequence is Putative sphingomyelin phosphodiesterase asm-3 (589 aa).

Residues 1–17 (MLLGLLVLSLAFQGTLA) form the signal peptide. One can recognise a Saposin B-type domain in the interval 18-101 (VTECEECKSI…LMKNDCGDFV (84 aa)). Intrachain disulfides connect C21–C97, C24–C89, and C52–C63. The N-linked (GlcNAc...) asparagine glycan is linked to N109. Positions 139 and 141 each coordinate Zn(2+). 2 disulfide bridges follow: C154/C159 and C160/C188. D217 contacts Zn(2+). N237 carries N-linked (GlcNAc...) asparagine glycosylation. N257 lines the Zn(2+) pocket. N-linked (GlcNAc...) asparagine glycosylation is present at N334. 3 residues coordinate Zn(2+): H364, H398, and H400. The N-linked (GlcNAc...) asparagine glycan is linked to N463. Disulfide bonds link C530/C535 and C541/C553. The disordered stretch occupies residues 562-589 (KPEPKKNKYSARFATSNERRRGKEECKI). Over residues 578–589 (NERRRGKEECKI) the composition is skewed to basic and acidic residues.

The protein belongs to the acid sphingomyelinase family. Zn(2+) is required as a cofactor.

The protein resides in the secreted. It catalyses the reaction an N-(acyl)-sphingosylphosphocholine + H2O = an N-acyl-sphingoid base + phosphocholine + H(+). The catalysed reaction is a sphingomyelin + H2O = phosphocholine + an N-acylsphing-4-enine + H(+). The enzyme catalyses an N-acyl-15-methylhexadecasphing-4-enine-1-phosphocholine + H2O = an N-acyl-15-methylhexadecasphing-4-enine + phosphocholine + H(+). It participates in lipid metabolism; sphingolipid metabolism. Functionally, converts sphingomyelin to ceramide (N-acyl-sphingoid base) and phosphocholine. C.elegans contain specific sphingoid bases, which are unique or different in structure compared to the sphingoid bases found in other animals. Two examples of these distinctive compounds are: 15-methylhexadecasphinganine and 15-methylhexadecasphing-4-enine. The sequence is that of Putative sphingomyelin phosphodiesterase asm-3 (asm-3) from Caenorhabditis elegans.